The sequence spans 336 residues: Phospho-N-acetylmuramoyl-pentapeptide-transferase (336 aa).

10 consecutive transmembrane segments (helical) span residues 3 to 23, 53 to 73, 78 to 98, 118 to 138, 143 to 163, 174 to 194, 200 to 220, 226 to 246, 251 to 271, and 316 to 336; these read LTLIAAIISFMVSAFTMPYFI, GGTVFLLVATAVSLLVSLFSI, SLALISGILSIVVIYGIIGFL, LALQLAGGLMFYFLHVSPSGI, VFGYQLSLGIFYLFFVLFWVV, GIDGLASISVVISLVTYGVIA, FDVLLLIGTMIGALLGFFCFN, VFMGDVGSLALGAMLAAISIA, WTLLIIGIVYVLETSSVMLQV, and AFLWGVGSLASLLVLAILYVF.

It belongs to the glycosyltransferase 4 family. MraY subfamily. Requires Mg(2+) as cofactor.

The protein localises to the cell membrane. The catalysed reaction is UDP-N-acetyl-alpha-D-muramoyl-L-alanyl-gamma-D-glutamyl-L-lysyl-D-alanyl-D-alanine + di-trans,octa-cis-undecaprenyl phosphate = Mur2Ac(oyl-L-Ala-gamma-D-Glu-L-Lys-D-Ala-D-Ala)-di-trans,octa-cis-undecaprenyl diphosphate + UMP. The protein operates within cell wall biogenesis; peptidoglycan biosynthesis. Functionally, catalyzes the initial step of the lipid cycle reactions in the biosynthesis of the cell wall peptidoglycan: transfers peptidoglycan precursor phospho-MurNAc-pentapeptide from UDP-MurNAc-pentapeptide onto the lipid carrier undecaprenyl phosphate, yielding undecaprenyl-pyrophosphoryl-MurNAc-pentapeptide, known as lipid I. In Streptococcus pyogenes serotype M4 (strain MGAS10750), this protein is Phospho-N-acetylmuramoyl-pentapeptide-transferase.